Here is a 130-residue protein sequence, read N- to C-terminus: Cyclin-dependent kinase 4 inhibitor B (130 aa).

ANK repeat units lie at residues 5-34 (SSDAGLATAAARGQVETVRQLLEAGADPNA), 38-66 (FGRRPIQVMMMGSAQVAELLLLHGAEPNC), 71-100 (TLTRPVHDAAREGFLDTLVVLHRAGARLDV), and 104-130 (WGRLPVDLAEEQGHRDIARYLHAATGD). Thr12 carries the phosphothreonine modification.

The protein belongs to the CDKN2 cyclin-dependent kinase inhibitor family. As to quaternary structure, heterodimer of CDKN2B with CDK4 or CDK6. As to expression, expressed ubiquitously.

Interacts strongly with CDK4 and CDK6. Potent inhibitor. Potential effector of TGF-beta induced cell cycle arrest. This is Cyclin-dependent kinase 4 inhibitor B (Cdkn2b) from Mus musculus (Mouse).